We begin with the raw amino-acid sequence, 307 residues long: Haloalkane dehalogenase (307 aa).

The region spanning 34-158 (PVLFLHGNPT…FQAFRTADVG (125 aa)) is the AB hydrolase-1 domain. The active-site Nucleophile is Asp106. The active-site Proton donor is the Glu130. His272 (proton acceptor) is an active-site residue.

This sequence belongs to the haloalkane dehalogenase family. Type 2 subfamily. In terms of assembly, monomer.

The catalysed reaction is 1-haloalkane + H2O = a halide anion + a primary alcohol + H(+). It functions in the pathway xenobiotic degradation; 1,2-dibromoethane degradation. Its function is as follows. Catalyzes hydrolytic cleavage of carbon-halogen bonds in halogenated aliphatic compounds, leading to the formation of the corresponding primary alcohols, halide ions and protons. Has a broad substrate specificity, which includes mono- and di-chlorinated and brominated alkanes. The highest activity was found with 1,2-dibromoethane, whereas low activity was measured with the analog 1,2-dichloroethane. The chain is Haloalkane dehalogenase (dhaAF) from Mycobacterium sp. (strain GP1).